The following is a 243-amino-acid chain: MAVQISKKRKFVADGIFKAELNEFLTRELAEDGYSGVEVRVTPTRTEIIILATRTQNVLGEKGRRIRELTAVVQKRFGFPEGSVELYAEKVATRGLCAIAQAESLRYKLLGGLAVRRACYGVLRFIMESGAKGCEVVVSGKLRGQRAKSMKFVDGLMIHSGDPVNYYVDTAVRHVLLRQGVLGIKVKIMLPWDPSGKIGPKKPLPDHVSIVEPKDEILPTTPISEQKGGKPEPPAMPQPVPTA.

Position 2 is an N-acetylalanine (alanine 2). Phosphoserine is present on residues serine 6 and serine 35. Residues 21-92 form the KH type-2 domain; the sequence is LNEFLTRELA…SVELYAEKVA (72 aa). Phosphothreonine is present on threonine 42. An N6-acetyllysine modification is found at lysine 62. An asymmetric dimethylarginine mark is found at arginine 64, arginine 65, and arginine 67. Threonine 70 carries the post-translational modification Phosphothreonine. Lysine 90 is covalently cross-linked (Glycyl lysine isopeptide (Lys-Gly) (interchain with G-Cter in ubiquitin)). Residue serine 104 is modified to Phosphoserine. Lysine 132 carries the N6-succinyllysine modification. The segment at 200-243 is disordered; sequence PKKPLPDHVSIVEPKDEILPTTPISEQKGGKPEPPAMPQPVPTA. A Glycyl lysine isopeptide (Lys-Gly) (interchain with G-Cter in ubiquitin) cross-link involves residue lysine 202. A Phosphoserine modification is found at serine 209. A Glycyl lysine isopeptide (Lys-Gly) (interchain with G-Cter in SUMO2); alternate cross-link involves residue lysine 214. Lysine 214 is covalently cross-linked (Glycyl lysine isopeptide (Lys-Gly) (interchain with G-Cter in ubiquitin); alternate). A phosphothreonine mark is found at threonine 220 and threonine 221. Serine 224 carries the post-translational modification Phosphoserine. Lysine 230 is covalently cross-linked (Glycyl lysine isopeptide (Lys-Gly) (interchain with G-Cter in SUMO2)). Pro residues predominate over residues 231–243; sequence PEPPAMPQPVPTA. The residue at position 242 (threonine 242) is a Phosphothreonine.

Belongs to the universal ribosomal protein uS3 family. As to quaternary structure, component of the 40S small ribosomal subunit. Identified in a IGF2BP1-dependent mRNP granule complex containing untranslated mRNAs. Interacts with HNRPD. Interacts with PRMT1; the interaction methylates RPS3. Interacts with SUMO1; the interaction sumoylates RPS3. Interacts with UBC9. Interacts with CDK1; the interaction phosphorylates RPS3. Interacts with PRKCD; the interaction phosphorylates RPS3. Interacts with PKB/AKT; the interaction phosphorylates RPS3. Interacts with E2F1; the interaction occurs in the absence of nerve growth factor and increases transcription of pro-apoptotic proteins BCL2L11/BIM and HRK/Dp5. Interacts with the base excision repair proteins APEX1 and OGG1; interaction with OGG1 increases OGG1 N-glycosylase activity. Interacts with UNG; the interaction increases the uracil excision activity of UNG1. Interacts with HSP90; the interaction prevents the ubiquitination and proteasome-dependent degradation of RPS3 and is suppressed by increased ROS levels. Interacts with TOM70; the interaction promotes translocation of RPS3 to the mitochondrion. Interacts (via N-terminus) with RELA (via N-terminus); the interaction enhances the DNA-binding activity of the NF-kappa-B p65-p50 complex. Interacts with NFKBIA; the interaction is direct and may bridge the interaction between RPS3 and RELA. Interacts with IKKB; the interaction phosphorylates RPS3 and enhances its translocation to the nucleus. Interacts (via KH domain) with MDM2 and TP53. Interacts with TRADD. Interacts with ASCC3. Identified in a HCV IRES-mediated translation complex, at least composed of EIF3C, IGF2BP1, RPS3 and HCV RNA-replicon. Interacts with CRY1. Methylation by PRMT1 is required for import into the nucleolus and for ribosome assembly. Post-translationally, sumoylation by SUMO1 enhances protein stability through increased resistance to proteolysis. Sumoylation occurs at one or more of the three consensus sites, Lys-18, Lys-214 and Lys-230. In terms of processing, phosphorylation at Thr-221 by CDK1 occurs mainly in G2/M phase. Phosphorylation by PRKCD occurs on a non-ribosomal-associated form which results in translocation of RPS3 to the nucleus and enhances its endonuclease activity. Phosphorylated on Ser-209 by IKKB in response to activation of the NF-kappa-B p65-p50 complex which enhances the association of RPS3 with importin-alpha and mediates the nuclear translocation of RPS3. Phosphorylation by MAPK is required for translocation to the nucleus following exposure of cells to DNA damaging agents such as hydrogen peroxide. Phosphorylation by PKB/AKT mediates RPS3 nuclear translocation, enhances RPS3 endonuclease activity and suppresses RPS3-induced neuronal apoptosis. Ubiquitinated; ubiquitination is prevented by interaction with HSP90 which stabilizes the protein. Monoubiquitinated at Lys-214 by RNF10 and ZNF598 when a ribosome has stalled during translation of poly(A) sequences, leading to preclude synthesis of a long poly-lysine tail and initiate the ribosome quality control (RQC) pathway to degrade the potentially detrimental aberrant nascent polypeptide. Deubiquitinated at Lys-214 by USP10, preventing degradation by the proteasome and promoting 40S ribosome subunit recycling following ribosome dissociation. Post-translationally, ufmylated by UFL1.

It localises to the cytoplasm. Its subcellular location is the nucleus. The protein resides in the nucleolus. It is found in the mitochondrion inner membrane. The protein localises to the cytoskeleton. It localises to the spindle. It catalyses the reaction 2'-deoxyribonucleotide-(2'-deoxyribose 5'-phosphate)-2'-deoxyribonucleotide-DNA = a 3'-end 2'-deoxyribonucleotide-(2,3-dehydro-2,3-deoxyribose 5'-phosphate)-DNA + a 5'-end 5'-phospho-2'-deoxyribonucleoside-DNA + H(+). Its activity is regulated as follows. Endonuclease activity is inhibited by MgCl2 on apurinic/apyrimidinic DNA but not on UV-irradiated DNA. Component of the small ribosomal subunit. The ribosome is a large ribonucleoprotein complex responsible for the synthesis of proteins in the cell. Has endonuclease activity and plays a role in repair of damaged DNA. Cleaves phosphodiester bonds of DNAs containing altered bases with broad specificity and cleaves supercoiled DNA more efficiently than relaxed DNA. Displays high binding affinity for 7,8-dihydro-8-oxoguanine (8-oxoG), a common DNA lesion caused by reactive oxygen species (ROS). Has also been shown to bind with similar affinity to intact and damaged DNA. Stimulates the N-glycosylase activity of the base excision protein OGG1. Enhances the uracil excision activity of UNG1. Also stimulates the cleavage of the phosphodiester backbone by APEX1. When located in the mitochondrion, reduces cellular ROS levels and mitochondrial DNA damage. Has also been shown to negatively regulate DNA repair in cells exposed to hydrogen peroxide. Plays a role in regulating transcription as part of the NF-kappa-B p65-p50 complex where it binds to the RELA/p65 subunit, enhances binding of the complex to DNA and promotes transcription of target genes. Represses its own translation by binding to its cognate mRNA. Binds to and protects TP53/p53 from MDM2-mediated ubiquitination. Involved in spindle formation and chromosome movement during mitosis by regulating microtubule polymerization. Involved in induction of apoptosis through its role in activation of CASP8. Induces neuronal apoptosis by interacting with the E2F1 transcription factor and acting synergistically with it to up-regulate pro-apoptotic proteins BCL2L11/BIM and HRK/Dp5. Interacts with TRADD following exposure to UV radiation and induces apoptosis by caspase-dependent JNK activation. This Oryctolagus cuniculus (Rabbit) protein is Small ribosomal subunit protein uS3 (RPS3).